The primary structure comprises 734 residues: Photosystem I P700 chlorophyll a apoprotein A2 (734 aa).

The next 8 helical transmembrane spans lie at 46–69, 135–158, 175–199, 273–291, 330–353, 369–395, 417–439, and 517–535; these read IFAS…FHVA, LYTG…LHLQ, LNHH…HVAI, IAHH…GHMY, IHFQ…QHMY, AALY…IFFI, AIIS…LYVH, and FLVH…LILV. [4Fe-4S] cluster-binding residues include Cys559 and Cys568. 2 helical membrane-spanning segments follow: residues 575 to 596 and 643 to 665; these read AFYL…YWHW and LSVW…MFLI. Positions 654, 662, and 670 each coordinate chlorophyll a. Trp671 lines the phylloquinone pocket. The chain crosses the membrane as a helical span at residues 707 to 727; it reads LVGLAHFSVGYIFTYAAFLIA.

The protein belongs to the PsaA/PsaB family. In terms of assembly, the PsaA/B heterodimer binds the P700 chlorophyll special pair and subsequent electron acceptors. PSI consists of a core antenna complex that captures photons, and an electron transfer chain that converts photonic excitation into a charge separation. The eukaryotic PSI reaction center is composed of at least 11 subunits. Requires P700 is a chlorophyll a/chlorophyll a' dimer, A0 is one or more chlorophyll a, A1 is one or both phylloquinones and FX is a shared 4Fe-4S iron-sulfur center. as cofactor.

The protein localises to the plastid. It is found in the chloroplast thylakoid membrane. The catalysed reaction is reduced [plastocyanin] + hnu + oxidized [2Fe-2S]-[ferredoxin] = oxidized [plastocyanin] + reduced [2Fe-2S]-[ferredoxin]. Its function is as follows. PsaA and PsaB bind P700, the primary electron donor of photosystem I (PSI), as well as the electron acceptors A0, A1 and FX. PSI is a plastocyanin-ferredoxin oxidoreductase, converting photonic excitation into a charge separation, which transfers an electron from the donor P700 chlorophyll pair to the spectroscopically characterized acceptors A0, A1, FX, FA and FB in turn. Oxidized P700 is reduced on the lumenal side of the thylakoid membrane by plastocyanin. In Aethionema cordifolium (Lebanon stonecress), this protein is Photosystem I P700 chlorophyll a apoprotein A2.